Here is a 563-residue protein sequence, read N- to C-terminus: BOS complex subunit NCLN (563 aa).

A signal peptide spans Met1–Ala42. At Ala43–Ala522 the chain is on the lumenal side. 2 N-linked (GlcNAc...) asparagine glycosylation sites follow: Asn241 and Asn428. A helical transmembrane segment spans residues Ile523–Val543. Residues Gln544–Gln563 lie on the Cytoplasmic side of the membrane.

This sequence belongs to the nicastrin family. As to quaternary structure, component of the back of Sec61 (BOS) complex, composed of NCLN/Nicalin, NOMO1 and TMEM147. The BOS complex is part of the multi-pass translocon (MPT) complex, composed of three subcomplexes, the GEL complex (composed of RAB5IF/OPTI and TMCO1), the BOS complex (composed of NCLN/Nicalin, NOMO1 and TMEM147) and the PAT complex (composed of WDR83OS/Asterix and CCDC47). The MPT complex associates with the SEC61 complex.

The protein resides in the endoplasmic reticulum membrane. Component of the multi-pass translocon (MPT) complex that mediates insertion of multi-pass membrane proteins into the lipid bilayer of membranes. The MPT complex takes over after the SEC61 complex: following membrane insertion of the first few transmembrane segments of proteins by the SEC61 complex, the MPT complex occludes the lateral gate of the SEC61 complex to promote insertion of subsequent transmembrane regions. May antagonize Nodal signaling and subsequent organization of axial structures during mesodermal patterning, via its interaction with NOMO. This Canis lupus familiaris (Dog) protein is BOS complex subunit NCLN.